Here is a 34-residue protein sequence, read N- to C-terminus: Jingzhaotoxin F7-10.36 (34 aa).

Cystine bridges form between cysteine 2–cysteine 17, cysteine 9–cysteine 22, and cysteine 16–cysteine 29.

It belongs to the neurotoxin 10 (Hwtx-1) family. 50 (Jztz-F7) subfamily. In terms of tissue distribution, expressed by the venom gland.

The protein resides in the secreted. Functionally, probable ion channel inhibitor. The sequence is that of Jingzhaotoxin F7-10.36 from Chilobrachys guangxiensis (Chinese earth tiger tarantula).